Reading from the N-terminus, the 485-residue chain is Ribulose bisphosphate carboxylase large chain 2 (485 aa).

Residues Asn-125 and Thr-175 each coordinate substrate. Lys-177 acts as the Proton acceptor in catalysis. Residue Lys-179 coordinates substrate. Positions 203, 205, and 206 each coordinate Mg(2+). At Lys-203 the chain carries N6-carboxylysine. Residue His-295 is the Proton acceptor of the active site. Arg-296, His-328, and Ser-380 together coordinate substrate.

Belongs to the RuBisCO large chain family. Type I subfamily. Heterohexadecamer of 8 large chains and 8 small chains. Mg(2+) serves as cofactor.

It carries out the reaction 2 (2R)-3-phosphoglycerate + 2 H(+) = D-ribulose 1,5-bisphosphate + CO2 + H2O. It catalyses the reaction D-ribulose 1,5-bisphosphate + O2 = 2-phosphoglycolate + (2R)-3-phosphoglycerate + 2 H(+). RuBisCO catalyzes two reactions: the carboxylation of D-ribulose 1,5-bisphosphate, the primary event in carbon dioxide fixation, as well as the oxidative fragmentation of the pentose substrate. Both reactions occur simultaneously and in competition at the same active site. In Methylibium petroleiphilum (strain ATCC BAA-1232 / LMG 22953 / PM1), this protein is Ribulose bisphosphate carboxylase large chain 2.